A 291-amino-acid polypeptide reads, in one-letter code: MAVTLSLLLGGRVCAAVTRCGFATRGVAGPGPIGREPDPDSDWEPEERELQEVESTLKRQKQAIRFQKIRRQMEAPGAPPRTLTWEAMEQIRYLHEEFPESWSVPRLAEGFDVSTDVIRRVLKSKFLPTLEQKLKQDQKVLKKAGLAHSLQHLRGSGNTSKLLPAGHSVSGSLLMPGHEASSKDPNHSTALKVIESDTHRTNTPRRRKGRNKEIQDLEESFVPVAAPLGHPRELQKYSSDSESPRGTGSGALPSGQKLEELKAEEPDNFSSKVVQRGREFFDSNGNFLYRI.

An N-terminal signal peptide occupies residues Met-1–Ala-15. 2 disordered regions span residues Gly-26–Arg-48 and Gly-155–Ser-270. Ser-41 carries the post-translational modification Phosphoserine. 2 N-linked (GlcNAc...) asparagine glycosylation sites follow: Asn-158 and Asn-186. The segment covering Lys-236–Gly-246 has biased composition (polar residues). The N-linked (GlcNAc...) asparagine glycan is linked to Asn-268.

Belongs to the neugrin family. As to quaternary structure, forms a regulatory protein-RNA complex, consisting of RCC1L, NGRN, RPUSD3, RPUSD4, TRUB2, FASTKD2 and 16S mt-rRNA. Interacts with 16S mt-rRNA; this interaction is direct. In terms of tissue distribution, expressed at high levels in heart, brain and skeletal muscle. In brain, mainly expressed in neurons rather than glial cells.

It is found in the nucleus. The protein resides in the secreted. The protein localises to the mitochondrion membrane. In terms of biological role, plays an essential role in mitochondrial ribosome biogenesis. As a component of a functional protein-RNA module, consisting of RCC1L, NGRN, RPUSD3, RPUSD4, TRUB2, FASTKD2 and 16S mitochondrial ribosomal RNA (16S mt-rRNA), controls 16S mt-rRNA abundance and is required for intra-mitochondrial translation of core subunits of the oxidative phosphorylation system. In Homo sapiens (Human), this protein is Neugrin.